Consider the following 155-residue polypeptide: Protein-export protein SecB (155 aa).

Belongs to the SecB family. As to quaternary structure, homotetramer, a dimer of dimers. One homotetramer interacts with 1 SecA dimer.

It localises to the cytoplasm. Its function is as follows. One of the proteins required for the normal export of preproteins out of the cell cytoplasm. It is a molecular chaperone that binds to a subset of precursor proteins, maintaining them in a translocation-competent state. It also specifically binds to its receptor SecA. This is Protein-export protein SecB from Methylococcus capsulatus (strain ATCC 33009 / NCIMB 11132 / Bath).